The chain runs to 438 residues: ATP-dependent protease ATPase subunit HslU (438 aa).

Residues Ile18, 60–65 (GVGKTE), Asp251, Glu316, and Arg388 each bind ATP.

It belongs to the ClpX chaperone family. HslU subfamily. As to quaternary structure, a double ring-shaped homohexamer of HslV is capped on each side by a ring-shaped HslU homohexamer. The assembly of the HslU/HslV complex is dependent on binding of ATP.

The protein resides in the cytoplasm. Functionally, ATPase subunit of a proteasome-like degradation complex; this subunit has chaperone activity. The binding of ATP and its subsequent hydrolysis by HslU are essential for unfolding of protein substrates subsequently hydrolyzed by HslV. HslU recognizes the N-terminal part of its protein substrates and unfolds these before they are guided to HslV for hydrolysis. This is ATP-dependent protease ATPase subunit HslU from Jannaschia sp. (strain CCS1).